The following is a 120-amino-acid chain: Large ribosomal subunit protein uL24 (120 aa).

The protein belongs to the universal ribosomal protein uL24 family. Part of the 50S ribosomal subunit.

In terms of biological role, one of two assembly initiator proteins, it binds directly to the 5'-end of the 23S rRNA, where it nucleates assembly of the 50S subunit. Functionally, located at the polypeptide exit tunnel on the outside of the subunit. This is Large ribosomal subunit protein uL24 from Methanocaldococcus jannaschii (strain ATCC 43067 / DSM 2661 / JAL-1 / JCM 10045 / NBRC 100440) (Methanococcus jannaschii).